The following is a 93-amino-acid chain: Small ribosomal subunit protein uS19 (93 aa).

This sequence belongs to the universal ribosomal protein uS19 family.

Functionally, protein S19 forms a complex with S13 that binds strongly to the 16S ribosomal RNA. The polypeptide is Small ribosomal subunit protein uS19 (Arthrobacter sp. (strain FB24)).